The primary structure comprises 95 residues: Defensin-1 (95 aa).

Positions 1–19 (MKIYFIVGLLFMAMVAIMA) are cleaved as a signal peptide. The propeptide occupies 20–43 (APVEDEFEPLEHFENEERADRHRR). 3 disulfide bridges follow: Cys-46/Cys-74, Cys-60/Cys-79, and Cys-64/Cys-81. Phe-94 carries the post-translational modification Phenylalanine amide.

It localises to the secreted. Functionally, found in royal jelly and in hemolymph, potent antibacterial protein against Gram-positive bacteria at low concentration. In Apis mellifera carnica (Carniolan honeybee), this protein is Defensin-1.